Here is a 313-residue protein sequence, read N- to C-terminus: PGR5-like protein 1B, chloroplastic (313 aa).

Residues 1-49 (MAFTLTIPRFSAISRKPITCSSSRTQCPAPFTHGRSISLRRRLTLLPLK) constitute a chloroplast transit peptide. At Ala50 the chain carries N-acetylalanine. Topologically, residues 50–187 (ASTDQSGQVG…KVYSDLAIDY (138 aa)) are stromal. An intrachain disulfide couples Cys71 to Cys172. The helical transmembrane segment at 188-208 (FKMFLLNVPATVVALGLFFFL) threads the bilayer. Over 209-225 (DDITGFEITYLLELPEP) the chain is Lumenal, thylakoid. The helical transmembrane segment at 226-246 (FSFIFTWFAAVPAIVYLALSL) threads the bilayer. The Stromal portion of the chain corresponds to 247 to 313 (TKLILKDFLI…LITLPEGGKA (67 aa)).

It belongs to the PGR5 family. Homodimer and heterodimer with PGR5. Interacts with PGR5, FD2, psaD1, LFNR1 and LFNR2. Also interacts with petC and a Fe-containing cofactor (FCC). Post-translationally, disulfide bonds; Cys-289 and Cys-292 are probably involved in the formation of disulfide bridges with 'Cys-11' and 'Cys-105' of PGR5 while Cys-261 and Cys-264 are probably involved in the binding of a Fe-containing cofactor (FCC).

The protein resides in the plastid. It localises to the chloroplast thylakoid membrane. Its activity is regulated as follows. Inhibited by antimycin A. Ferredoxin-plastoquinone reductase involved in cyclic electron flow (CEF) around photosystem I. The homodimer is probably not involved in CEF. This Arabidopsis thaliana (Mouse-ear cress) protein is PGR5-like protein 1B, chloroplastic (PGRL1B).